Consider the following 25-residue polypeptide: Ocellatin-L2 (25 aa).

Leu25 carries the post-translational modification Leucine amide.

Belongs to the frog skin active peptide (FSAP) family. Ocellatin subfamily. In terms of tissue distribution, expressed by the skin glands.

The protein resides in the secreted. Its function is as follows. Shows a low activity in stimulating insulin release from rat BRIN-BD11 beta cells, and acts without loss of integrity of the plasma membrane. Does not show antibacterial (E.coli and S.aureus). Does not show hemolytic activity against human erythrocytes. In Leptodactylus laticeps (Santa Fe frog), this protein is Ocellatin-L2.